The sequence spans 474 residues: Lysosomal protective protein (474 aa).

The signal sequence occupies residues 1 to 23 (MPGTALSPLLLLLLLSWASRNEA). 4 disulfide bridges follow: cysteine 83–cysteine 356, cysteine 235–cysteine 251, cysteine 236–cysteine 241, and cysteine 276–cysteine 325. N-linked (GlcNAc...) (high mannose) asparagine glycosylation is present at asparagine 140. Serine 173 is a catalytic residue. Asparagine 327 is a glycosylation site (N-linked (GlcNAc...) (high mannose) asparagine). Active-site residues include aspartate 394 and histidine 451.

It belongs to the peptidase S10 family. In terms of assembly, heterodimer of a 32 kDa chain and a 20 kDa chain; disulfide-linked.

Its subcellular location is the lysosome. It catalyses the reaction Release of a C-terminal amino acid with broad specificity.. Protective protein appears to be essential for both the activity of beta-galactosidase and neuraminidase, it associates with these enzymes and exerts a protective function necessary for their stability and activity. This protein is also a carboxypeptidase and can deamidate tachykinins. The chain is Lysosomal protective protein (Ctsa) from Mus musculus (Mouse).